A 613-amino-acid polypeptide reads, in one-letter code: UBX domain-containing protein 3 (613 aa).

2 disordered regions span residues 67–223 (PAAA…PINP) and 453–472 (MNEQSERREREEREAIRNQQ). Low complexity predominate over residues 68–82 (AAASGRNAGASSSSR). Over residues 137–149 (THHRGAAIPRQKR) the composition is skewed to basic residues. A compositionally biased stretch (low complexity) spans 158–169 (SSSGSSSASFSS). Residues 452–517 (RMNEQSERRE…EEEECVRRQT (66 aa)) are a coiled coil. Positions 531-610 (PLAEIINVKF…KWPAREQIFV (80 aa)) constitute a UBX domain. The short motif at 582-584 (FPK) is the Interaction with cdc-48 element.

In terms of assembly, forms a complex composed of ubxn-3, cdc-48.1, ufd-1 and npl-4.1. Forms a complex composed of ubxn-3, cdc-48.1 and/or cdc-48.2 and substrate cdt-1. Interacts (via FPK motif) with cdc-48.1 (via N-terminus) and cdc-48.2 (via N-terminus). Interacts (via N-terminus) with cdt-1 and ubiquitinated protein substrates; the interaction is cdc-48-independent. May interact with npl-4.1. As to expression, expressed in the germline (at protein level). Expressed in spermatocytes but not in mature sperm (at protein level). Expressed in the spermatheca and nerve cells.

The protein resides in the nucleus. Its subcellular location is the cytoplasm. It is found in the perinuclear region. The protein localises to the chromosome. Functionally, ubiquitin-binding protein which acts as an adapter for ATPase cdc-48.1 and/or cdc-48.2, conferring substrate specificity. Together with ubxn-1 and ubxn-2, plays a role in hermaphrodite spermatogenesis probably by promoting the degradation of sex determination terminal factor tra-1. During mitosis, ensures the degradation of DNA licensing factor cdt-1 and the disassembly of the DNA replication CMG helicase complex by promoting the dissociation from chromatin of several of its components including cdc-45 and sld-5. This Caenorhabditis elegans protein is UBX domain-containing protein 3.